We begin with the raw amino-acid sequence, 252 residues long: 3-dehydroquinate dehydratase (252 aa).

Residues Ser-21, 46 to 48, and Arg-82 each bind 3-dehydroquinate; that span reads EWR. His-143 serves as the catalytic Proton donor/acceptor. Lys-170 (schiff-base intermediate with substrate) is an active-site residue. Arg-213, Ser-232, and Gln-236 together coordinate 3-dehydroquinate.

The protein belongs to the type-I 3-dehydroquinase family. As to quaternary structure, homodimer.

It catalyses the reaction 3-dehydroquinate = 3-dehydroshikimate + H2O. The protein operates within metabolic intermediate biosynthesis; chorismate biosynthesis; chorismate from D-erythrose 4-phosphate and phosphoenolpyruvate: step 3/7. Its function is as follows. Involved in the third step of the chorismate pathway, which leads to the biosynthesis of aromatic amino acids. Catalyzes the cis-dehydration of 3-dehydroquinate (DHQ) and introduces the first double bond of the aromatic ring to yield 3-dehydroshikimate. The sequence is that of 3-dehydroquinate dehydratase from Shigella boydii serotype 4 (strain Sb227).